The following is a 71-amino-acid chain: Large ribosomal subunit protein bL28 (71 aa).

This sequence belongs to the bacterial ribosomal protein bL28 family.

The protein is Large ribosomal subunit protein bL28 of Rubrobacter xylanophilus (strain DSM 9941 / JCM 11954 / NBRC 16129 / PRD-1).